The primary structure comprises 132 residues: Small ribosomal subunit protein uS8 (132 aa).

The protein belongs to the universal ribosomal protein uS8 family. In terms of assembly, part of the 30S ribosomal subunit. Contacts proteins S5 and S12.

Functionally, one of the primary rRNA binding proteins, it binds directly to 16S rRNA central domain where it helps coordinate assembly of the platform of the 30S subunit. The protein is Small ribosomal subunit protein uS8 of Natranaerobius thermophilus (strain ATCC BAA-1301 / DSM 18059 / JW/NM-WN-LF).